The following is a 319-amino-acid chain: Lipoyl synthase (319 aa).

[4Fe-4S] cluster contacts are provided by Cys66, Cys71, Cys77, Cys92, Cys96, Cys99, and Ser305. Residues 78–294 form the Radical SAM core domain; the sequence is FNRGTATFMI…KKEALSIGFT (217 aa).

The protein belongs to the radical SAM superfamily. Lipoyl synthase family. Requires [4Fe-4S] cluster as cofactor.

Its subcellular location is the cytoplasm. It carries out the reaction [[Fe-S] cluster scaffold protein carrying a second [4Fe-4S](2+) cluster] + N(6)-octanoyl-L-lysyl-[protein] + 2 oxidized [2Fe-2S]-[ferredoxin] + 2 S-adenosyl-L-methionine + 4 H(+) = [[Fe-S] cluster scaffold protein] + N(6)-[(R)-dihydrolipoyl]-L-lysyl-[protein] + 4 Fe(3+) + 2 hydrogen sulfide + 2 5'-deoxyadenosine + 2 L-methionine + 2 reduced [2Fe-2S]-[ferredoxin]. Its pathway is protein modification; protein lipoylation via endogenous pathway; protein N(6)-(lipoyl)lysine from octanoyl-[acyl-carrier-protein]: step 2/2. In terms of biological role, catalyzes the radical-mediated insertion of two sulfur atoms into the C-6 and C-8 positions of the octanoyl moiety bound to the lipoyl domains of lipoate-dependent enzymes, thereby converting the octanoylated domains into lipoylated derivatives. The protein is Lipoyl synthase of Buchnera aphidicola subsp. Schizaphis graminum (strain Sg).